We begin with the raw amino-acid sequence, 341 residues long: Trimethylamine N-oxide transport system ATP-binding protein TmoW (341 aa).

Residues 6-265 (IKCESVYKIF…PATEYVRKFT (260 aa)) form the ABC transporter domain. 61-68 (GLSGSGKS) provides a ligand contact to ATP.

Belongs to the ABC transporter superfamily. In terms of assembly, the complex is probably composed of two ATP-binding proteins (TmoW), two transmembrane proteins (TmoV) and a solute-binding protein (TmoX).

The protein localises to the cell inner membrane. The enzyme catalyses a quaternary ammonium(out) + ATP + H2O = a quaternary ammonium(in) + ADP + phosphate + H(+). Its function is as follows. Part of the ABC transporter complex TmoXWV involved in trimethylamine N-oxide (TMAO) import. Responsible for energy coupling to the transport system. The sequence is that of Trimethylamine N-oxide transport system ATP-binding protein TmoW from Pelagibacter ubique (strain HTCC1062).